The primary structure comprises 295 residues: sn-glycerol-3-phosphate transport system permease protein UgpA (295 aa).

Residues M1–S11 are Cytoplasmic-facing. Residues W12–P32 form a helical membrane-spanning segment. The Periplasmic segment spans residues A33 to A80. Residues F72–Q284 enclose the ABC transmembrane type-1 domain. A helical membrane pass occupies residues L81–L101. Over R102 to T109 the chain is Cytoplasmic. A helical transmembrane segment spans residues L110–F130. Over D131–A157 the chain is Periplasmic. A helical transmembrane segment spans residues M158–L178. Residues A179–V207 lie on the Cytoplasmic side of the membrane. The helical transmembrane segment at L208–F228 threads the bilayer. Residues D229–D262 are Periplasmic-facing. Residues L263 to I283 form a helical membrane-spanning segment. Residues Q284–Q295 lie on the Cytoplasmic side of the membrane.

This sequence belongs to the binding-protein-dependent transport system permease family. UgpAE subfamily. As to quaternary structure, the complex is composed of two ATP-binding proteins (UgpC), two transmembrane proteins (UgpA and UgpE) and a solute-binding protein (UgpB).

It is found in the cell inner membrane. Its function is as follows. Part of the ABC transporter complex UgpBAEC involved in sn-glycerol-3-phosphate (G3P) import. Probably responsible for the translocation of the substrate across the membrane. This chain is sn-glycerol-3-phosphate transport system permease protein UgpA (ugpA), found in Yersinia pestis bv. Antiqua (strain Antiqua).